Consider the following 404-residue polypeptide: Caspase-1 (404 aa).

The region spanning 1–91 (MADKVLKDKR…HLAQTLGLSS (91 aa)) is the CARD domain. Residues 1 to 119 (MADKVLKDKR…SLPAFVENMP (119 aa)) constitute a propeptide that is removed on maturation. Active-site residues include histidine 237 and cysteine 285. The propeptide occupies 298-316 (SPKASTDSWTHQPLMLQSD). Serine 302 is modified (phosphoserine).

It belongs to the peptidase C14A family. In terms of assembly, heterotetramer that consists of two anti-parallel arranged heterodimers, each one formed by a 20 kDa (Caspase-1 subunit p20) and a 10 kDa (Caspase-1 subunit p10) subunit. May be a component of the inflammasome, a protein complex which also includes PYCARD, CARD8 and NLRP2 and whose function would be the activation of pro-inflammatory caspases. Component of the AIM2 PANoptosome complex, a multiprotein complex that drives inflammatory cell death (PANoptosis). Both the p10 and p20 subunits interact with MEFV. Interacts with CARD17P/INCA and CARD18. Interacts with SERPINB1; this interaction regulates CASP1 activity. Heterotetramer that consists of two anti-parallel arranged heterodimers, each one formed by a 20 kDa (Caspase-1 subunit p20) and a 10 kDa (Caspase-1 subunit p10) subunit. Post-translationally, the two subunits are derived from the precursor sequence by an autocatalytic mechanism. In terms of processing, ubiquitinated via 'Lys-11'-linked polyubiquitination. Deubiquitinated by USP8.

The protein resides in the cytoplasm. It localises to the cell membrane. It carries out the reaction Strict requirement for an Asp residue at position P1 and has a preferred cleavage sequence of Tyr-Val-Ala-Asp-|-.. Functionally, thiol protease involved in a variety of inflammatory processes by proteolytically cleaving other proteins, such as the precursors of the inflammatory cytokines interleukin-1 beta (IL1B) and interleukin 18 (IL18) as well as the pyroptosis inducer Gasdermin-D (GSDMD), into active mature peptides. Plays a key role in cell immunity as an inflammatory response initiator: once activated through formation of an inflammasome complex, it initiates a pro-inflammatory response through the cleavage of the two inflammatory cytokines IL1B and IL18, releasing the mature cytokines which are involved in a variety of inflammatory processes. Cleaves a tetrapeptide after an Asp residue at position P1. Also initiates pyroptosis, a programmed lytic cell death pathway, through cleavage of GSDMD. In contrast to cleavage of interleukin IL1B, recognition and cleavage of GSDMD is not strictly dependent on the consensus cleavage site but depends on an exosite interface on CASP1 that recognizes and binds the Gasdermin-D, C-terminal (GSDMD-CT) part. Cleaves and activates CASP7 in response to bacterial infection, promoting plasma membrane repair. Upon inflammasome activation, during DNA virus infection but not RNA virus challenge, controls antiviral immunity through the cleavage of CGAS, rendering it inactive. In apoptotic cells, cleaves SPHK2 which is released from cells and remains enzymatically active extracellularly. In Canis lupus familiaris (Dog), this protein is Caspase-1 (CASP1).